A 450-amino-acid polypeptide reads, in one-letter code: Putative MYST-like histone acetyltransferase 1 (450 aa).

A Tudor-knot domain is found at 63–122; the sequence is LEVGTRVMCRWRDQKLHPVKVIERRKSSTSSSPADYEYYVHYTEFNRRLDEWVKLEQLDL. Residues 174-445 form the MYST-type HAT domain; the sequence is TKVKNIAKIE…VDVSKLIWTP (272 aa). The C2HC MYST-type zinc finger occupies 207 to 232; the sequence is LFFCEFCLNFMKRKEQLQRHMKKCDL. Lysine 274 bears the N6-acetyllysine; by autocatalysis mark. Residues 317 to 319 and 324 to 330 each bind acetyl-CoA; these read ILT and QRKGYGK. Glutamate 350 serves as the catalytic Proton donor/acceptor. An acetyl-CoA-binding site is contributed by serine 354.

The protein belongs to the MYST (SAS/MOZ) family. Autoacetylation at Lys-274 is required for proper function.

Its subcellular location is the nucleus. The catalysed reaction is L-lysyl-[protein] + acetyl-CoA = N(6)-acetyl-L-lysyl-[protein] + CoA + H(+). Its function is as follows. Histone acetyltransferase which may be involved in transcriptional activation. In Oryza sativa subsp. japonica (Rice), this protein is Putative MYST-like histone acetyltransferase 1.